The sequence spans 175 residues: Adenine phosphoribosyltransferase (175 aa).

It belongs to the purine/pyrimidine phosphoribosyltransferase family. Homodimer.

It localises to the cytoplasm. The catalysed reaction is AMP + diphosphate = 5-phospho-alpha-D-ribose 1-diphosphate + adenine. Its pathway is purine metabolism; AMP biosynthesis via salvage pathway; AMP from adenine: step 1/1. Functionally, catalyzes a salvage reaction resulting in the formation of AMP, that is energically less costly than de novo synthesis. The protein is Adenine phosphoribosyltransferase of Lactobacillus johnsonii (strain CNCM I-12250 / La1 / NCC 533).